The following is a 3198-amino-acid chain: MNEGNSAGGGHEGLSPAPPAVPDRVTPHSTEISVAPANSTSTTVRAAGSVGAALPATRHHQHIATQVKGIASSSSKQQKQLASAQLPVPLSPLPQQQQQTAEATAAAAAPAHSNVSVSSSTIEASVLPPQAKRQRLDDNEDRTSAASIVGPAESSNIVSSLLPASVASSSEVGGLSSTALQDLNALKKRILQQKLQILRNLKERHLENVSEYFYLQNGGSMMDYPAWRKKTPTPQFISYSNANRIDQLIHEDKPSTSAAAAAAQNQKYTTQQTDSVESSLVSGIGTGATKGAPLDGNISNSTVKTNTQSQVPSKIGSFTESTPAATESNSSTTVPGTATSGAATSTSATSAEASGNVLAVEAEIKIPAVGATPVAISTKLPAAVVQLTQQGGTPLLPCNTSAGSTALRRPQGQNNASSGSAAASGGGGSLTPTPLYTGNGPAALGGSGGLTPGTPTSGSLLSPALGGGSGTPNSAAQEFSFKAKQEVYVMQRISELQREGLWTERRLPKLQEPSRPKAHWDYLLEEMVWLAADFAQERKWKKNAAKKCAKMVQKYFQDKATAAQRAEKAQELQLKRVASFIAREVKSFWSNVEKLVEYKHQTKIEEKRKQALDQHLSFIVDQTEKFSQQLVEGMNKSVADTPSLNSSRLTSPKRESDDDFRPESGSEDDEETIAKAEEDAADVKEEVTALAKESEMDFDDFLNDLPPGYLENRDKLMKEEQSSAIKTETPDDSDDSEFEAKEASDDDENTISKQEEAEQEIDHKKEIDELEADNDLSVEQLLAKYKSEQPPSPKRRKLAPRDPELDSDDDSTAVDSTEESEDAATEDEEDLSTVKTDTDMEEQDEQEDGLKSLMADADATSGAAGSGSTAGASGNKDDMLNDAAALAESLQPKGNTLSSTNVVTPVPFLLKHSLREYQHIGLDWLVTMNERKLNGILADEMGLGKTIQTIALLAHLACAKGNWGPHLIVVPSSVMLNWEMEFKKWCPGFKILTYYGSQKERKLKRVGWTKPNAFHVCITSYKLVVQDQQSFRRKKWKYLILDEAQNIKNFKSQRWQLLLNFSTERRLLLTGTPLQNDLMELWSLMHFLMPYVFSSHREFKEWFSNPMTGMIEGNMEYNETLITRLHKVIRPFLLRRLKKEVEKQMPKKYEHVITCRLSNRQRYLYEDFMSRAKTRETLQTGNLLSVINVLMQLRKVCNHPNMFEARPTISPFQMDGITFHTPRLVCDIMEYDPFTQINLETLNLLLLHLEQTMTAYVSHKSRLLAPPRKLIEDIDTAPLPAPRCPNGKYRFHIRVRSAELAQRIKLNAVKVGASPAMRLEGSKIMPMRNLLPSGRVLKRVSASINPVNMALKPVVINSVVTTTSSSTTASSPTGALSVLSNSKLLGARSQINAPTPAKVAKTMQDGKPFFYLTPATNSGAAGARLTLTSKTTASASTTTSRTTVTASTTSGQQLIRDPIVKDLATHVKSTVQKQSIANGKTEPEEETEAEDPYKVQELIQMRKEQRLAALKRMAMINRRRTDATPIYGEDCREAIQRCMQATRSLKRSTWQTRGYANCCTAMAHRNGWSLNHLLKSFEERCADLKPVFANFVIYVPSVCAPRIRRYVQNLSSTHWQHEQRIENIVDQALRPKLALLHPIISEMTTKFPDPRLIQYDCGKLQTMDRLLRQLKVNGHRVLIFTQMTKMLDVLEAFLNYHGHIYLRLDGSTRVEQRQILMERFNGDKRIFCFILSTRSGGVGINLTGADTVIFYDSDWNPTMDAQAQDRCHRIGQTRDVHIYRLVSERTIEVNILKKANQKRMLSDMAIEGGNFTTTYFKSSTIKDLFTMEQSEQDESSQEKSENKDRIVATTTLSDTPSTVVETEKQSLRAFEHALAAAEDEQDVQATKTAKAEVAADLAEFDENIPIATEDPNAEGGPQVELSKADLEMQNLVKQLSPIERYAMRFVEETGAAWTAEQLRAAEAELEAQKREWEANRLAAMHKEEELLKQETEAEEMLTYSRKDSSNQVWISRNTMEQMPMWCPPTPPQDNDNDIYIDYSLSFMYELEPIAETDLPPVYVRKEHKRSRTDAGYDGSRRPNKMRREDNYVPPRSLFDRPTPQLARLRRELKSQRFRGSFKPNMPIPGLKPQLPTKPLTEPEAMAEWCVFEDMAILHVLVNLQGLPCSLMLLSPGQTPNWDLVSEMVNFCSKTYRSARQCRWRYETHIQPREEGKVVESPKKQKKLKPTLRTEYLKSPLRYLRTTQLYVSDNNASFYKTMRSRFDSIKTAYLKKAPPPKRQFSAPSLMNPKHMEVLQEFGILNYDQPVSPQNIAAMKANKIREKQRGQQMSQPPVGVGVVQQMQQQSQQQQQPAPPPLPQQQQPQQVVQQVQQQQQQQQQQQQQQVVQQQLPTVSNVQQTLPVQQTVELVQQQPTTTTTVAVPAAGGQLQQLQIQHLTSSNVSPGQQTAILLHQPQQQLRTHPGQGGQSNTQQLVKTIVGTSSSLTAGQLQQLAQQSAVASGGQSSVSVVLTTPVQTLPSVVQPQIGSGAQIVSISSQTLPVNSSPQLGSIVQTQSLPQVVSVSTLPTVGTVLTTTANQPQQQHQTTAVTTLNTTMLRGQRIVSTAAGNTLQQRTTAGGQSIVSMPNLGQGASPSQFQTQLRLAAVPTSPATQTTQLVTTKGIPVSALQQGGKTTVIPVTQQSGGAHIQLYRQRSLKVLQTTTQAVPSGSAGATGATANLVQAGGTIIQASNMATHVTSQKVAVSGMPGTSTTVQAGNVVSSVQMHGQARTQFIKQMAAGKQQLQRQVVSADGTTTTTAAGDMLLVKRHNILAAQKAQQASGALFTTTTGQQQQQQQQQGQLPVAGQPQQVTQHQIASLVKASTAAAASGSSVNAGGVTVSATNPTVQAGSVNMTLPQLKPGSQIKVTMPNQMRHLQMQQQLTMPRKISRMTQLVSASGQPTATNIITTTGPQQQQQGVTVSGGGTLPTVASQQQQQQHQQKVGGGNSVQAQLLHIQNTKGLSNSVTMQQIQQVMRSGQQGTLATTNLVLGKTSVGRVIPVSVASQANQRQTIQVVSAASAQALAAGNLRTHVAGPSIASTLKVAAPGSAGGQTTQQTLIAALQHNQRQNASPVRLQTTAGGNLLAVVQQQQQQQHTSIAGPTAGPAEVMTITQTTTTLPTVGSLQQQQQQQQQQGGISQPTTQQVRKLVQKKILIRSEKE.

Gly residues predominate over residues 1-12 (MNEGNSAGGGHE). Disordered regions lie at residues 1-27 (MNEG…RVTP), 93-112 (LPQQ…APAH), and 119-148 (SSTI…AASI). Residues 134–143 (QRLDDNEDRT) are compositionally biased toward basic and acidic residues. The stretch at 187 to 212 (KKRILQQKLQILRNLKERHLENVSEY) forms a coiled coil. 2 disordered regions span residues 256-350 (TSAA…SATS) and 391-474 (GGTP…TPNS). Polar residues-rich tracts occupy residues 264–281 (QNQK…SSLV) and 297–329 (NISN…TESN). Positions 330–350 (SSTTVPGTATSGAATSTSATS) are enriched in low complexity. The span at 391–404 (GGTPLLPCNTSAGS) shows a compositional bias: polar residues. Residues 452 to 464 (PGTPTSGSLLSPA) show a composition bias toward low complexity. The HSA domain maps to 507–579 (LPKLQEPSRP…QELQLKRVAS (73 aa)). The segment at 635–848 (NKSVADTPSL…DMEEQDEQED (214 aa)) is disordered. The span at 638-650 (VADTPSLNSSRLT) shows a compositional bias: polar residues. A compositionally biased stretch (basic and acidic residues) spans 652-664 (PKRESDDDFRPES). Phosphoserine is present on residues Ser-656, Ser-664, and Ser-666. Positions 666-696 (SEDDEETIAKAEEDAADVKEEVTALAKESEM) form a coiled coil. 2 stretches are compositionally biased toward basic and acidic residues: residues 672-695 (TIAK…KESE) and 711-721 (ENRDKLMKEEQ). Thr-729 is subject to Phosphothreonine. Ser-733, Ser-736, and Ser-744 each carry phosphoserine. A coiled-coil region spans residues 741–784 (KEASDDDENTISKQEEAEQEIDHKKEIDELEADNDLSVEQLLAK). A compositionally biased stretch (basic and acidic residues) spans 753 to 767 (KQEEAEQEIDHKKEI). Acidic residues predominate over residues 805-831 (LDSDDDSTAVDSTEESEDAATEDEEDL). Thr-838 carries the post-translational modification Phosphothreonine. The Helicase ATP-binding domain occupies 926 to 1091 (VTMNERKLNG…WSLMHFLMPY (166 aa)). 939-946 (DEMGLGKT) contributes to the ATP binding site. The interval 1471-1492 (VQKQSIANGKTEPEEETEAEDP) is disordered. The Helicase C-terminal domain occupies 1662–1812 (TMDRLLRQLK…DMAIEGGNFT (151 aa)). The tract at residues 1828-1856 (EQSEQDESSQEKSENKDRIVATTTLSDTP) is disordered. A compositionally biased stretch (basic and acidic residues) spans 1836 to 1846 (SQEKSENKDRI). A coiled-coil region spans residues 1951–1996 (AAWTAEQLRAAEAELEAQKREWEANRLAAMHKEEELLKQETEAEEM). The interval 2061-2100 (KEHKRSRTDAGYDGSRRPNKMRREDNYVPPRSLFDRPTPQ) is disordered. A compositionally biased stretch (basic and acidic residues) spans 2067-2086 (RTDAGYDGSRRPNKMRREDN). One can recognise a Myb-like domain in the interval 2136 to 2205 (TEPEAMAEWC…QCRWRYETHI (70 aa)). The tract at residues 2318 to 2362 (IREKQRGQQMSQPPVGVGVVQQMQQQSQQQQQPAPPPLPQQQQPQ) is disordered. Residues 2325–2349 (QQMSQPPVGVGVVQQMQQQSQQQQQ) are compositionally biased toward low complexity.

It belongs to the SNF2/RAD54 helicase family. SWR1 subfamily. As to quaternary structure, component of the Tip60 chromatin-remodeling complex which contains Domino, Tip60, Tra1, Brd8, E(Pc), DMAP1, Pontin, Reptin, Ing3, Act87E, BAP55, Mrg15, MrgBP, Gas41 and YL-1. Isoform B is present at high levels in ovary, in follicle cells, nurse cells and oocyte. Isoform B is also present in germline and somatic stem cells from the germarium. Isoform A is undetectable in adult ovary (at protein level).

It localises to the nucleus. Mediates the ATP-dependent exchange of unmodified histone H2AV for its phosphorylated and acetylated form H2AVK5acS138ph, leading to transcriptional regulation of selected genes by chromatin remodeling. Involved in Notch signaling. Represses E2F target genes. Required for somatic stem cell self-renewal but not for germline stem cell self-renewal. Involved in oogenesis. In Drosophila melanogaster (Fruit fly), this protein is Helicase domino (dom).